Consider the following 132-residue polypeptide: Small ribosomal subunit protein uS8 (132 aa).

It belongs to the universal ribosomal protein uS8 family. In terms of assembly, part of the 30S ribosomal subunit. Contacts proteins S5 and S12.

Functionally, one of the primary rRNA binding proteins, it binds directly to 16S rRNA central domain where it helps coordinate assembly of the platform of the 30S subunit. The protein is Small ribosomal subunit protein uS8 of Borrelia turicatae (strain 91E135).